The chain runs to 160 residues: Cytochrome b6-f complex subunit 4 (160 aa).

3 consecutive transmembrane segments (helical) span residues 36 to 56 (LLYI…GLAV), 95 to 115 (LLGV…PFIE), and 131 to 151 (ILFL…TFPI).

It belongs to the cytochrome b family. PetD subfamily. As to quaternary structure, the 4 large subunits of the cytochrome b6-f complex are cytochrome b6, subunit IV (17 kDa polypeptide, petD), cytochrome f and the Rieske protein, while the 4 small subunits are petG, petL, petM and petN. The complex functions as a dimer.

The protein resides in the plastid. Its subcellular location is the chloroplast thylakoid membrane. Functionally, component of the cytochrome b6-f complex, which mediates electron transfer between photosystem II (PSII) and photosystem I (PSI), cyclic electron flow around PSI, and state transitions. The polypeptide is Cytochrome b6-f complex subunit 4 (Chlamydomonas moewusii (Chlamydomonas eugametos)).